Reading from the N-terminus, the 234-residue chain is Proteasome subunit alpha type-2 (234 aa).

The protein belongs to the peptidase T1A family. The 26S proteasome consists of a 20S proteasome core and two 19S regulatory subunits. The 20S proteasome core is composed of 28 subunits that are arranged in four stacked rings, resulting in a barrel-shaped structure. The two end rings are each formed by seven alpha subunits, and the two central rings are each formed by seven beta subunits. The catalytic chamber with the active sites is on the inside of the barrel. Interacts with Rpn6.

Its subcellular location is the cytoplasm. It localises to the nucleus. The proteasome is a multicatalytic proteinase complex which is characterized by its ability to cleave peptides with Arg, Phe, Tyr, Leu, and Glu adjacent to the leaving group at neutral or slightly basic pH. The proteasome has an ATP-dependent proteolytic activity. This chain is Proteasome subunit alpha type-2 (Prosalpha2), found in Drosophila melanogaster (Fruit fly).